Here is a 444-residue protein sequence, read N- to C-terminus: Transcription activator AKTR-1 (444 aa).

A DNA-binding region (zn(2)-C6 fungal-type) is located at residues 16-43 (CDFCTQSKLRCNKNKPSCRRCTIQQQPC). The segment at 49 to 87 (RRTGRPPKHPRKANDCQEANGQHGEQDPVTSTPGGSCQQ) is disordered. Over residues 50 to 59 (RTGRPPKHPR) the composition is skewed to basic residues. Residues 76–87 (PVTSTPGGSCQQ) are compositionally biased toward polar residues.

The protein localises to the nucleus. Transcription factor that regulates the expression of the gene clusters that mediate the biosynthesis of the host-selective toxins (HSTs) AK-toxins responsible for Japanese pear black spot disease by the Japanese pear pathotype. AK-toxins are esters of 9,10-epoxy 8-hydroxy 9-methyldecatrienoic acid (EDA). On cellular level, AK-toxins affect plasma membrane of susceptible cells and cause a sudden increase in loss of K(+) after a few minutes of toxin treatment. This Alternaria alternata (Alternaria rot fungus) protein is Transcription activator AKTR-1.